Here is a 209-residue protein sequence, read N- to C-terminus: Tektin bundle-interacting protein 1 (209 aa).

Microtubule inner protein component of sperm flagellar doublet microtubules.

It localises to the cytoplasm. The protein localises to the cytoskeleton. It is found in the cilium axoneme. The protein resides in the flagellum axoneme. Its function is as follows. Microtubule inner protein (MIP) part of the dynein-decorated doublet microtubules (DMTs) in cilia axoneme, which is required for motile cilia beating. Located at the center of the tektin bundle where may function to recruit tektins or stabilize the bundle. The protein is Tektin bundle-interacting protein 1 (TEKTIP1) of Macaca fascicularis (Crab-eating macaque).